A 156-amino-acid polypeptide reads, in one-letter code: Arginine repressor (156 aa).

Belongs to the ArgR family.

It is found in the cytoplasm. It functions in the pathway amino-acid biosynthesis; L-arginine biosynthesis [regulation]. Regulates arginine biosynthesis genes. This chain is Arginine repressor, found in Shewanella loihica (strain ATCC BAA-1088 / PV-4).